Reading from the N-terminus, the 307-residue chain is Porphobilinogen deaminase (307 aa).

Cysteine 241 is modified (S-(dipyrrolylmethanemethyl)cysteine).

It belongs to the HMBS family. As to quaternary structure, monomer. Requires dipyrromethane as cofactor.

The catalysed reaction is 4 porphobilinogen + H2O = hydroxymethylbilane + 4 NH4(+). The protein operates within porphyrin-containing compound metabolism; protoporphyrin-IX biosynthesis; coproporphyrinogen-III from 5-aminolevulinate: step 2/4. Its function is as follows. Tetrapolymerization of the monopyrrole PBG into the hydroxymethylbilane pre-uroporphyrinogen in several discrete steps. The polypeptide is Porphobilinogen deaminase (Coxiella burnetii (strain CbuG_Q212) (Coxiella burnetii (strain Q212))).